We begin with the raw amino-acid sequence, 1034 residues long: Kinesin-like protein KIF28 (1034 aa).

In terms of domain architecture, Kinesin motor spans 16 to 363 (SVRVAVRVRP…LRYAERAKKV (348 aa)). Residue 119–126 (GQTGSGKS) coordinates ATP. An FHA domain is found at 465-528 (CEVGRAASNA…LQHLDRIILG (64 aa)). Coiled coils occupy residues 875-904 (NQVP…LRGE) and 994-1027 (HQQS…KKKE).

This sequence belongs to the TRAFAC class myosin-kinesin ATPase superfamily. Kinesin family.

The protein localises to the mitochondrion membrane. Functionally, microtubule-dependent motor protein required for mitochondrion morphology and transport of mitochondria in neuronal cells. The polypeptide is Kinesin-like protein KIF28 (Rattus norvegicus (Rat)).